Here is a 326-residue protein sequence, read N- to C-terminus: uncharacterized protein (326 aa).

3 Solcar repeats span residues 15–106 (EFLV…VRRV), 114–215 (ETHA…ATDF), and 234–322 (LKTW…SKAL). 6 consecutive transmembrane segments (helical) span residues 16–36 (FLVKSGIAGGTAGCVAKSVVA), 83–103 (TATLYRVFPYAGIKFVAYEQV), 120–140 (FLSGSLAGTCSVFFTYPLELI), 191–211 (FSVTLTGIFPYAGMSFLAYDL), 240–260 (LLCGAFAGVCGQTVSYPFEVC), and 294–314 (FFVGLTIGYIKVIPMVSTSFF).

Belongs to the mitochondrial carrier (TC 2.A.29) family.

Its subcellular location is the mitochondrion inner membrane. This is an uncharacterized protein from Schizosaccharomyces pombe (strain 972 / ATCC 24843) (Fission yeast).